A 23-amino-acid chain; its full sequence is Caerulein precursor fragment R6 (23 aa).

In terms of tissue distribution, expressed by the skin glands.

The protein resides in the secreted. Functionally, antimicrobial peptide. The protein is Caerulein precursor fragment R6 of Xenopus ruwenzoriensis (Uganda clawed frog).